Here is a 216-residue protein sequence, read N- to C-terminus: Adenylate kinase (216 aa).

Residue 10–15 coordinates ATP; that stretch reads GAGKGT. Positions 30–59 are NMP; sequence STGDIFRANIKEKTPLGIEAKRYMDNGQLV. Residues T31, R36, 57 to 59, 85 to 88, and Q92 contribute to the AMP site; these read QLV and GFPR. The interval 126 to 163 is LID; it reads GRRVCTSCGASYHIRFNPPKIEGKCDICDNELIQRKDD. R127 contacts ATP. Zn(2+) is bound by residues C130 and C133. 136–137 contacts ATP; sequence SY. Zn(2+)-binding residues include C150 and C153. Positions 160 and 171 each coordinate AMP. E199 provides a ligand contact to ATP.

It belongs to the adenylate kinase family. Monomer.

It is found in the cytoplasm. It carries out the reaction AMP + ATP = 2 ADP. Its pathway is purine metabolism; AMP biosynthesis via salvage pathway; AMP from ADP: step 1/1. Functionally, catalyzes the reversible transfer of the terminal phosphate group between ATP and AMP. Plays an important role in cellular energy homeostasis and in adenine nucleotide metabolism. In Clostridium botulinum (strain Loch Maree / Type A3), this protein is Adenylate kinase.